The primary structure comprises 294 residues: Acetylglutamate kinase (294 aa).

Residues 63 to 64, Arg85, and Asn188 contribute to the substrate site; that span reads GG.

It belongs to the acetylglutamate kinase family. ArgB subfamily.

It is found in the cytoplasm. The catalysed reaction is N-acetyl-L-glutamate + ATP = N-acetyl-L-glutamyl 5-phosphate + ADP. Its pathway is amino-acid biosynthesis; L-arginine biosynthesis; N(2)-acetyl-L-ornithine from L-glutamate: step 2/4. Its function is as follows. Catalyzes the ATP-dependent phosphorylation of N-acetyl-L-glutamate. This Methanococcus vannielii (strain ATCC 35089 / DSM 1224 / JCM 13029 / OCM 148 / SB) protein is Acetylglutamate kinase.